Reading from the N-terminus, the 65-residue chain is U2-theraphotoxin-Pc1a (65 aa).

Positions 1–20 (MGFKLVLFIAVLTLVGSSNA) are cleaved as a signal peptide. A propeptide spanning residues 21–36 (EISAKMDSRDSPMIQE) is cleaved from the precursor. Cystine bridges form between Cys-39/Cys-56, Cys-46/Cys-59, and Cys-55/Cys-64.

Belongs to the neurotoxin 36 family. 02 subfamily. In terms of tissue distribution, expressed by the venom gland.

Its subcellular location is the secreted. Possesses strong antiplasmodial activity against the intra-erythrocyte stage of P.falciparum in vitro. IC(50) for inhibiting P.falciparum growth is 1.15 uM. Specifically interacts with infected erythrocytes. Does not lyse erythrocytes, is not cytotoxic to nucleated mammalian cells, and does not inhibit neuromuscular function. Has neither antibacterial nor antifungal activity. In Psalmopoeus cambridgei (Trinidad chevron tarantula), this protein is U2-theraphotoxin-Pc1a.